The chain runs to 271 residues: MLTKKPEINTILQATPDPHSLPAAMATEDLHVYYGDNHAIKGVDLTFPENKVTALIGPSGCGKSTYLRALNRMNDEIDGCRMEGQILYDGININRKEVDLYNVRKEIGMVFQKPNPFTKSIYENVAFGLKRHGMKNKKEIMERVEKSLRRAALWDEVKDDLGKSALSLSGGQQQRLCIARAVAMQPKVLLLDEPASALDPISTSKIEDLINELKNKYTIIIVTHNMQQAARVSDYTSFFYLGEVVEFSGTSELFTNPQQKQTEDYISGNFG.

Residues 25-266 form the ABC transporter domain; sequence MATEDLHVYY…PQQKQTEDYI (242 aa). 57–64 is an ATP binding site; it reads GPSGCGKS.

The protein belongs to the ABC transporter superfamily. Phosphate importer (TC 3.A.1.7) family. In terms of assembly, the complex is composed of two ATP-binding proteins (PstB), two transmembrane proteins (PstC and PstA) and a solute-binding protein (PstS).

It is found in the cell membrane. It catalyses the reaction phosphate(out) + ATP + H2O = ADP + 2 phosphate(in) + H(+). Functionally, part of the ABC transporter complex PstSACB involved in phosphate import. Responsible for energy coupling to the transport system. This Listeria monocytogenes serotype 4b (strain F2365) protein is Phosphate import ATP-binding protein PstB 2.